The sequence spans 325 residues: Glutarate 2-hydroxylase (325 aa).

Residues His-160, Asp-162, and His-292 each coordinate Fe cation.

The protein belongs to the glutarate hydroxylase family. As to quaternary structure, homotetramer. The cofactor is Fe(2+).

It catalyses the reaction glutarate + 2-oxoglutarate + O2 = (S)-2-hydroxyglutarate + succinate + CO2. It functions in the pathway amino-acid degradation. Acts as an alpha-ketoglutarate-dependent dioxygenase catalyzing hydroxylation of glutarate (GA) to L-2-hydroxyglutarate (L2HG). Functions in a L-lysine degradation pathway that proceeds via cadaverine, glutarate and L-2-hydroxyglutarate. The protein is Glutarate 2-hydroxylase of Escherichia coli O6:K15:H31 (strain 536 / UPEC).